Reading from the N-terminus, the 404-residue chain is Probable tRNA sulfurtransferase (404 aa).

The THUMP domain maps to 61–166 (EAVSERLKDV…SGYSYIMCDE (106 aa)). Residues 184 to 185 (LL), 209 to 210 (HF), R266, G288, and Q297 contribute to the ATP site.

It belongs to the ThiI family.

Its subcellular location is the cytoplasm. The catalysed reaction is [ThiI sulfur-carrier protein]-S-sulfanyl-L-cysteine + a uridine in tRNA + 2 reduced [2Fe-2S]-[ferredoxin] + ATP + H(+) = [ThiI sulfur-carrier protein]-L-cysteine + a 4-thiouridine in tRNA + 2 oxidized [2Fe-2S]-[ferredoxin] + AMP + diphosphate. It catalyses the reaction [ThiS sulfur-carrier protein]-C-terminal Gly-Gly-AMP + S-sulfanyl-L-cysteinyl-[cysteine desulfurase] + AH2 = [ThiS sulfur-carrier protein]-C-terminal-Gly-aminoethanethioate + L-cysteinyl-[cysteine desulfurase] + A + AMP + 2 H(+). It participates in cofactor biosynthesis; thiamine diphosphate biosynthesis. Catalyzes the ATP-dependent transfer of a sulfur to tRNA to produce 4-thiouridine in position 8 of tRNAs, which functions as a near-UV photosensor. Also catalyzes the transfer of sulfur to the sulfur carrier protein ThiS, forming ThiS-thiocarboxylate. This is a step in the synthesis of thiazole, in the thiamine biosynthesis pathway. The sulfur is donated as persulfide by IscS. The protein is Probable tRNA sulfurtransferase of Bacillus cereus (strain ATCC 10987 / NRS 248).